The chain runs to 246 residues: 1-(5-phosphoribosyl)-5-[(5-phosphoribosylamino)methylideneamino] imidazole-4-carboxamide isomerase (246 aa).

Asp-8 acts as the Proton acceptor in catalysis. The Proton donor role is filled by Asp-131.

This sequence belongs to the HisA/HisF family.

Its subcellular location is the cytoplasm. The enzyme catalyses 1-(5-phospho-beta-D-ribosyl)-5-[(5-phospho-beta-D-ribosylamino)methylideneamino]imidazole-4-carboxamide = 5-[(5-phospho-1-deoxy-D-ribulos-1-ylimino)methylamino]-1-(5-phospho-beta-D-ribosyl)imidazole-4-carboxamide. The protein operates within amino-acid biosynthesis; L-histidine biosynthesis; L-histidine from 5-phospho-alpha-D-ribose 1-diphosphate: step 4/9. The protein is 1-(5-phosphoribosyl)-5-[(5-phosphoribosylamino)methylideneamino] imidazole-4-carboxamide isomerase of Bordetella avium (strain 197N).